Here is an 876-residue protein sequence, read N- to C-terminus: MSKSTAEIRQAFLDFFHSKGHQVVASSSLVPHNDPTLLFTNAGMNQFKDVFLGLDKRNYSRATTSQRCVRAGGKHNDLENVGYTARHHTFFEMLGNFSFGDYFKHDAIQFAWELLTSEKWFALPKERLWVTVYESDDEAYEIWEKEVGIPRERIIRIGDNKGAPYASDNFWQMGDTGPCGPCTEIFYDHGDHIWGGPPGSPEEDGDRYIEIWNIVFMQFNRQADGTMEPLPKPSVDTGMGLERIAAVLQHVNSNYDIDLFRTLIQAVAKVTGATDLSNKSLRVIADHIRSCAFLIADGVMPSNENRGYVLRRIIRRAVRHGNMLGAKETFFYKLVGPLIDVMGSAGEDLKRQQAQVEQVLKTEEEQFARTLERGLALLDEELAKLSGDTLDGETAFRLYDTYGFPVDLTADVCRERNIKVDEAGFEAAMEEQRRRAREASGFGADYNAMIRVDSASEFKGYDHLELNGKVTALFVDGKAVDAINAGQEAVVVLDQTPFYAESGGQVGDKGELKGANFSFAVEDTQKYGQAIGHIGKLAAGSLKVGDAVQADVDEARRARIRLNHSATHLMHAALRQVLGTHVSQKGSLVNDKVLRFDFSHNEAMKPEEIRVVEDLVNAQIRRNLPIETNIMDLEAAKAKGAMALFGEKYDERVRVLSMGDFSTELCGGTHASRTGDIGLFRIISESGTAAGVRRIEAVTGEGAITTVHADSDRLSEVAHLLKGDSNNLADKVRSVLERTRQLEKELQQLKEQAAAQESANLSSKAIDVNGVKLLVSELSGVEPKMLRTMVDDLKNQLGSTIIVLATVAEGKVSLIAGVSKDVTDRVKAGELIGMVAQQVGGKGGGRPDMAQAGGTDAAALPAALASVKGWVSAKLQ.

N6-acetyllysine is present on lysine 74. Zn(2+) is bound by residues histidine 564, histidine 568, cysteine 666, and histidine 670.

This sequence belongs to the class-II aminoacyl-tRNA synthetase family. In terms of assembly, homotetramer. Zn(2+) serves as cofactor.

It localises to the cytoplasm. It catalyses the reaction tRNA(Ala) + L-alanine + ATP = L-alanyl-tRNA(Ala) + AMP + diphosphate. In terms of biological role, catalyzes the attachment of alanine to tRNA(Ala) in a two-step reaction: alanine is first activated by ATP to form Ala-AMP and then transferred to the acceptor end of tRNA(Ala). Also edits incorrectly charged Ser-tRNA(Ala) and Gly-tRNA(Ala) via its editing domain. The protein is Alanine--tRNA ligase of Shigella boydii serotype 18 (strain CDC 3083-94 / BS512).